A 1080-amino-acid chain; its full sequence is Carbamoyl phosphate synthase large chain (1080 aa).

The carboxyphosphate synthetic domain stretch occupies residues 1–403 (MPKRTDLKTI…SLQKALRGLE (403 aa)). 12 residues coordinate ATP: Arg-129, Arg-169, Gly-175, Gly-176, Glu-208, Val-210, Glu-215, Gly-241, Val-242, His-243, Gln-285, and Glu-299. The ATP-grasp 1 domain maps to 133–328 (RVAMGEIGLD…IAKVAAKLAV (196 aa)). Mg(2+)-binding residues include Gln-285, Glu-299, and Asn-301. 3 residues coordinate Mn(2+): Gln-285, Glu-299, and Asn-301. Residues 404-554 (TGKIGLDPTG…YSTYEDECEA (151 aa)) are oligomerization domain. The segment at 555–942 (LPSNRDKIMI…AFARAQEAGG (388 aa)) is carbamoyl phosphate synthetic domain. Residues 679 to 876 (QQLVDKLGLK…LAKIAARCMA (198 aa)) enclose the ATP-grasp 2 domain. The ATP site is built by Arg-715, Arg-754, Leu-756, Glu-761, Gly-787, Val-788, His-789, Ser-790, Gln-830, and Glu-847. Residues Gln-830, Glu-847, and Asn-849 each coordinate Mg(2+). Mn(2+)-binding residues include Gln-830, Glu-847, and Asn-849. In terms of domain architecture, MGS-like spans 943-1080 (IKAPPLGKAF…LQELHKELEA (138 aa)). The segment at 943–1080 (IKAPPLGKAF…LQELHKELEA (138 aa)) is allosteric domain.

Belongs to the CarB family. In terms of assembly, composed of two chains; the small (or glutamine) chain promotes the hydrolysis of glutamine to ammonia, which is used by the large (or ammonia) chain to synthesize carbamoyl phosphate. Tetramer of heterodimers (alpha,beta)4. Mg(2+) serves as cofactor. The cofactor is Mn(2+).

The catalysed reaction is hydrogencarbonate + L-glutamine + 2 ATP + H2O = carbamoyl phosphate + L-glutamate + 2 ADP + phosphate + 2 H(+). It catalyses the reaction hydrogencarbonate + NH4(+) + 2 ATP = carbamoyl phosphate + 2 ADP + phosphate + 2 H(+). Its pathway is amino-acid biosynthesis; L-arginine biosynthesis; carbamoyl phosphate from bicarbonate: step 1/1. The protein operates within pyrimidine metabolism; UMP biosynthesis via de novo pathway; (S)-dihydroorotate from bicarbonate: step 1/3. Large subunit of the glutamine-dependent carbamoyl phosphate synthetase (CPSase). CPSase catalyzes the formation of carbamoyl phosphate from the ammonia moiety of glutamine, carbonate, and phosphate donated by ATP, constituting the first step of 2 biosynthetic pathways, one leading to arginine and/or urea and the other to pyrimidine nucleotides. The large subunit (synthetase) binds the substrates ammonia (free or transferred from glutamine from the small subunit), hydrogencarbonate and ATP and carries out an ATP-coupled ligase reaction, activating hydrogencarbonate by forming carboxy phosphate which reacts with ammonia to form carbamoyl phosphate. The protein is Carbamoyl phosphate synthase large chain of Xanthomonas campestris pv. campestris (strain ATCC 33913 / DSM 3586 / NCPPB 528 / LMG 568 / P 25).